The chain runs to 422 residues: Histidine--tRNA ligase (422 aa).

This sequence belongs to the class-II aminoacyl-tRNA synthetase family. In terms of assembly, homodimer.

The protein resides in the cytoplasm. The catalysed reaction is tRNA(His) + L-histidine + ATP = L-histidyl-tRNA(His) + AMP + diphosphate + H(+). This chain is Histidine--tRNA ligase, found in Vibrio cholerae serotype O1 (strain ATCC 39541 / Classical Ogawa 395 / O395).